The primary structure comprises 669 residues: Probable L-type lectin-domain containing receptor kinase I.2 (669 aa).

An N-terminal signal peptide occupies residues methionine 1 to glutamine 24. The Extracellular portion of the chain corresponds to glutamine 25–proline 295. The interval aspartate 26–serine 266 is legume-lectin like. Asparagine 132, asparagine 189, asparagine 212, and asparagine 233 each carry an N-linked (GlcNAc...) asparagine glycan. The helical transmembrane segment at leucine 296–tyrosine 316 threads the bilayer. Topologically, residues leucine 317 to arginine 669 are cytoplasmic. The Protein kinase domain occupies phenylalanine 351 to leucine 609. ATP is bound by residues leucine 357–valine 365 and lysine 379. Aspartate 475 (proton acceptor) is an active-site residue.

This sequence in the C-terminal section; belongs to the protein kinase superfamily. Ser/Thr protein kinase family. The protein in the N-terminal section; belongs to the leguminous lectin family.

It localises to the cell membrane. It catalyses the reaction L-seryl-[protein] + ATP = O-phospho-L-seryl-[protein] + ADP + H(+). The enzyme catalyses L-threonyl-[protein] + ATP = O-phospho-L-threonyl-[protein] + ADP + H(+). Its function is as follows. Involved in resistance response to the pathogenic fungus Alternaria brassicicola. This is Probable L-type lectin-domain containing receptor kinase I.2 from Arabidopsis thaliana (Mouse-ear cress).